A 157-amino-acid chain; its full sequence is Transcription elongation factor GreA (157 aa).

This sequence belongs to the GreA/GreB family.

Necessary for efficient RNA polymerase transcription elongation past template-encoded arresting sites. The arresting sites in DNA have the property of trapping a certain fraction of elongating RNA polymerases that pass through, resulting in locked ternary complexes. Cleavage of the nascent transcript by cleavage factors such as GreA or GreB allows the resumption of elongation from the new 3'terminus. GreA releases sequences of 2 to 3 nucleotides. This chain is Transcription elongation factor GreA, found in Phenylobacterium zucineum (strain HLK1).